A 130-amino-acid chain; its full sequence is uncharacterized protein (130 aa).

N-acetylmethionine is present on methionine 1.

As to quaternary structure, homotetramer.

This is an uncharacterized protein from Arabidopsis thaliana (Mouse-ear cress).